We begin with the raw amino-acid sequence, 382 residues long: Mannitol-1-phosphate 5-dehydrogenase (382 aa).

4-15 provides a ligand contact to NAD(+); it reads AVHFGAGNIGRG.

The protein belongs to the mannitol dehydrogenase family.

It carries out the reaction D-mannitol 1-phosphate + NAD(+) = beta-D-fructose 6-phosphate + NADH + H(+). The chain is Mannitol-1-phosphate 5-dehydrogenase from Vibrio vulnificus (strain YJ016).